The chain runs to 657 residues: Transmembrane protein 232 (657 aa).

Helical transmembrane passes span Ile168–Phe188 and Trp353–Ala373.

It is found in the membrane. Its function is as follows. Plays a critical role for male fertility and sperm motility by regulating sperm cytoplasm removal and maintaining axoneme integrity. The sequence is that of Transmembrane protein 232 (TMEM232) from Homo sapiens (Human).